We begin with the raw amino-acid sequence, 295 residues long: MSSSRPVFRSRWLPYLLVAPQLIITVIFFIWPAGEALWYSLQSVDPFGFSSQFVGLDNFVALFHDSYYIDSFWTTIKFSTFVTVSGLLVSLFFAALVEYIVRGSRFYQTLMLLPYAVAPAVAAVLWIFLFNPGRGLITHFLAEFGYDWNHAQNSGQAMFLVVFASVWKQISYNFLFFYAALQSIPRSLIEAAAIDGVGPIRRFFKIALPLIAPVSFFLLVVNLVYAFFDTFPVIDAATSGGPVQAITTLIYKIYREGFTGLDLASSAAQSVVLMFLVIVLTVVQFRYVESKVRYQ.

The Cytoplasmic segment spans residues Met1–Arg11. The chain crosses the membrane as a helical span at residues Trp12–Pro32. Residues Ala33 to Thr80 are Periplasmic-facing. Positions Ile76–Gln284 constitute an ABC transmembrane type-1 domain. The chain crosses the membrane as a helical span at residues Phe81 to Val101. The Cytoplasmic portion of the chain corresponds to Arg102–Thr109. A helical membrane pass occupies residues Leu110–Phe130. At Asn131–Gln156 the chain is on the periplasmic side. A helical membrane pass occupies residues Ala157–Phe177. Residues Tyr178–Ala207 are Cytoplasmic-facing. The helical transmembrane segment at Leu208–Phe228 threads the bilayer. Residues Asp229 to Asp262 are Periplasmic-facing. A helical membrane pass occupies residues Leu263–Val283. Topologically, residues Gln284–Gln295 are cytoplasmic.

This sequence belongs to the binding-protein-dependent transport system permease family. UgpAE subfamily. The complex is composed of two ATP-binding proteins (UgpC), two transmembrane proteins (UgpA and UgpE) and a solute-binding protein (UgpB).

The protein localises to the cell inner membrane. Its function is as follows. Part of the ABC transporter complex UgpBAEC involved in sn-glycerol-3-phosphate (G3P) import. Probably responsible for the translocation of the substrate across the membrane. The protein is sn-glycerol-3-phosphate transport system permease protein UgpA (ugpA) of Shigella dysenteriae serotype 1 (strain Sd197).